The sequence spans 620 residues: Probable potassium transport system protein Kup 1 (620 aa).

The next 12 membrane-spanning stretches (helical) occupy residues 7-27, 50-70, 102-122, 136-156, 168-188, 211-231, 246-266, 284-304, 336-356, 368-388, 393-413, and 415-435; these read GIGL…TSPL, VLSL…VIVI, MMLG…TPAI, PDLK…LFAI, FGPV…ANIV, LMSF…EALY, WFGL…ALLI, MVVP…QAVI, IYVP…VVGF, IAVT…AALL, PVVV…FFAA, and IIKV…SFTV.

The protein belongs to the HAK/KUP transporter (TC 2.A.72) family.

The protein resides in the cell inner membrane. The catalysed reaction is K(+)(in) + H(+)(in) = K(+)(out) + H(+)(out). Functionally, transport of potassium into the cell. Likely operates as a K(+):H(+) symporter. This chain is Probable potassium transport system protein Kup 1, found in Rhodopseudomonas palustris (strain ATCC BAA-98 / CGA009).